Consider the following 278-residue polypeptide: 4-hydroxy-tetrahydrodipicolinate reductase (278 aa).

Residues 13 to 18 (GAAGKM) and 111 to 113 (GTT) contribute to the NAD(+) site. The active-site Proton donor/acceptor is His167. Residue His168 participates in (S)-2,3,4,5-tetrahydrodipicolinate binding. Lys171 functions as the Proton donor in the catalytic mechanism. 177-178 (GT) provides a ligand contact to (S)-2,3,4,5-tetrahydrodipicolinate.

The protein belongs to the DapB family.

Its subcellular location is the cytoplasm. It catalyses the reaction (S)-2,3,4,5-tetrahydrodipicolinate + NAD(+) + H2O = (2S,4S)-4-hydroxy-2,3,4,5-tetrahydrodipicolinate + NADH + H(+). The enzyme catalyses (S)-2,3,4,5-tetrahydrodipicolinate + NADP(+) + H2O = (2S,4S)-4-hydroxy-2,3,4,5-tetrahydrodipicolinate + NADPH + H(+). It participates in amino-acid biosynthesis; L-lysine biosynthesis via DAP pathway; (S)-tetrahydrodipicolinate from L-aspartate: step 4/4. Its function is as follows. Catalyzes the conversion of 4-hydroxy-tetrahydrodipicolinate (HTPA) to tetrahydrodipicolinate. This chain is 4-hydroxy-tetrahydrodipicolinate reductase, found in Nostoc punctiforme (strain ATCC 29133 / PCC 73102).